The chain runs to 434 residues: Beta-enolase (434 aa).

A2 carries the N-acetylalanine modification. Residue T72 is modified to Phosphothreonine. A phosphoserine mark is found at S83 and S157. The substrate site is built by H158 and E167. The residue at position 176 (S176) is a Phosphoserine. Phosphothreonine is present on T205. E210 serves as the catalytic Proton donor. A Phosphothreonine modification is found at T229. Y236 is subject to Phosphotyrosine. Residue D245 participates in Mg(2+) binding. A Phosphoserine modification is found at S263. 2 residues coordinate substrate: E293 and D318. Residues E293 and D318 each coordinate Mg(2+). K343 (proton acceptor) is an active-site residue. Substrate is bound by residues 370–373 (SHRS) and K394.

The protein belongs to the enolase family. In terms of assembly, mammalian enolase is composed of 3 isozyme subunits, alpha, beta and gamma, which can form homodimers or heterodimers which are cell-type and development-specific. Interacts with PNKD. It depends on Mg(2+) as a cofactor. As to expression, the alpha/alpha homodimer is expressed in embryo and in most adult tissues. The alpha/beta heterodimer and the beta/beta homodimer are found in striated muscle, and the alpha/gamma heterodimer and the gamma/gamma homodimer in neurons.

It is found in the cytoplasm. It catalyses the reaction (2R)-2-phosphoglycerate = phosphoenolpyruvate + H2O. The protein operates within carbohydrate degradation; glycolysis; pyruvate from D-glyceraldehyde 3-phosphate: step 4/5. Its function is as follows. Glycolytic enzyme that catalyzes the conversion of 2-phosphoglycerate to phosphoenolpyruvate. Appears to have a function in striated muscle development and regeneration. In Rattus norvegicus (Rat), this protein is Beta-enolase (Eno3).